Reading from the N-terminus, the 477-residue chain is Bifunctional protein HldE (477 aa).

The interval 1–318 (MKVTLPEFER…ENAVRGRADT (318 aa)) is ribokinase. Position 179 is an N6-acetyllysine (lysine 179). Residue 195–198 (NLSE) coordinates ATP. Residue aspartate 264 is part of the active site. Positions 344-477 (MTNGVFDILH…IKKIQQDKKG (134 aa)) are cytidylyltransferase.

The protein in the N-terminal section; belongs to the carbohydrate kinase PfkB family. It in the C-terminal section; belongs to the cytidylyltransferase family. Homodimer.

The enzyme catalyses D-glycero-beta-D-manno-heptose 7-phosphate + ATP = D-glycero-beta-D-manno-heptose 1,7-bisphosphate + ADP + H(+). It catalyses the reaction D-glycero-beta-D-manno-heptose 1-phosphate + ATP + H(+) = ADP-D-glycero-beta-D-manno-heptose + diphosphate. It functions in the pathway nucleotide-sugar biosynthesis; ADP-L-glycero-beta-D-manno-heptose biosynthesis; ADP-L-glycero-beta-D-manno-heptose from D-glycero-beta-D-manno-heptose 7-phosphate: step 1/4. Its pathway is nucleotide-sugar biosynthesis; ADP-L-glycero-beta-D-manno-heptose biosynthesis; ADP-L-glycero-beta-D-manno-heptose from D-glycero-beta-D-manno-heptose 7-phosphate: step 3/4. Catalyzes the phosphorylation of D-glycero-D-manno-heptose 7-phosphate at the C-1 position to selectively form D-glycero-beta-D-manno-heptose-1,7-bisphosphate. Functionally, catalyzes the ADP transfer from ATP to D-glycero-beta-D-manno-heptose 1-phosphate, yielding ADP-D-glycero-beta-D-manno-heptose. This chain is Bifunctional protein HldE, found in Escherichia coli (strain 55989 / EAEC).